The sequence spans 1726 residues: Protein Shroom2 (1726 aa).

The PDZ domain occupies 79 to 159 (AGGCYSYWRG…ILKMIVKRRN (81 aa)). Disordered regions lie at residues 294-373 (DNTK…RSDS), 425-451 (RTVA…LSPY), 657-676 (FSQL…DYSW), and 697-785 (EGRN…STYR). Positions 318 to 328 (VLQSTSINETS) are enriched in polar residues. Positions 329–338 (KIQRTEDNTE) are enriched in basic and acidic residues. Residues 657–667 (FSQLDHSEKGS) are compositionally biased toward basic and acidic residues. Polar residues-rich tracts occupy residues 746 to 755 (SKSTAALTES) and 769 to 785 (LESM…STYR). The ASD1 domain occupies 788–877 (LQEAQARVLR…SEPEKINEVG (90 aa)). 6 disordered regions span residues 913–968 (PKVP…DKVT), 1007–1080 (LDAD…QCGA), 1092–1120 (KWKP…GTLP), 1166–1240 (FKKR…KNPS), 1269–1299 (SSKS…DKPP), and 1471–1499 (AQQR…VPSA). Low complexity predominate over residues 917–926 (PKVVSSSQSE). Residues 936 to 948 (DYAKSSEGQESKR) are compositionally biased toward basic and acidic residues. 2 stretches are compositionally biased toward polar residues: residues 1054–1070 (NSNS…SPTR) and 1104–1119 (ETSN…SGTL). The span at 1191-1205 (SSSSLATSSESLLTA) shows a compositional bias: low complexity. Over residues 1209 to 1235 (RAQSYSPSSQDTFPPQSLQKQSPSTYP) the composition is skewed to polar residues. Residues 1427–1721 (EELVREIVDK…QLKCLTDSLP (295 aa)) enclose the ASD2 domain.

Belongs to the shroom family. In terms of assembly, interacts with F-actin.

It is found in the apical cell membrane. Its subcellular location is the cell junction. The protein localises to the tight junction. The protein resides in the cytoplasm. It localises to the cytoskeleton. Its function is as follows. May be involved in endothelial cell morphology changes during cell spreading. Required for eye pigmentation. In the retinal pigment epithelium, regulates the biogenesis of melanosomes and promotes their association with the apical cell surface by inducing gamma-tubulin redistribution. In Xenopus tropicalis (Western clawed frog), this protein is Protein Shroom2 (shroom2).